The sequence spans 517 residues: Perilipin-1 (517 aa).

S81 carries the post-translational modification Phosphoserine. At T85 the chain carries Phosphothreonine. S126, S130, S132, S137, and S174 each carry phosphoserine. The tract at residues 195-216 (DKESAPSSGRQRTQKAPKAKPS) is disordered. Phosphothreonine is present on residues T223, T298, and T300. The disordered stretch occupies residues 286–320 (LAASQDESHDDQTDTEGEETDDEEEEEESEAEENV). Residues 290-321 (QDESHDDQTDTEGEETDDEEEEEESEAEENVL) are required for interaction with CIDEC. Residues 298–318 (TDTEGEETDDEEEEEESEAEE) are compositionally biased toward acidic residues. 9 positions are modified to phosphoserine: S314, S384, S386, S410, S433, S439, S460, S492, and S494. The tract at residues 425-490 (SAEAERKGSG…AMPREKPARR (66 aa)) is disordered.

The protein belongs to the perilipin family. Interacts with ABHD5. Interacts with CIDEC. Interacts with AQP7. Major cAMP-dependent protein kinase-substrate in adipocytes, also dephosphorylated by PP1. When phosphorylated, may be maximally sensitive to HSL and when unphosphorylated, may play a role in the inhibition of lipolysis, by acting as a barrier in lipid droplet.

Its subcellular location is the endoplasmic reticulum. It localises to the lipid droplet. Its function is as follows. Modulator of adipocyte lipid metabolism. Coats lipid storage droplets to protect them from breakdown by hormone-sensitive lipase (HSL). Its absence may result in leanness. Plays a role in unilocular lipid droplet formation by activating CIDEC. Their interaction promotes lipid droplet enlargement and directional net neutral lipid transfer. May modulate lipolysis and triglyceride levels. This Mus musculus (Mouse) protein is Perilipin-1 (Plin1).